The chain runs to 541 residues: 5' exonuclease Apollo (541 aa).

A Glycyl lysine isopeptide (Lys-Gly) (interchain with G-Cter in SUMO2) cross-link involves residue lysine 334. Disordered stretches follow at residues 350-375 (TQGV…KKHK) and 450-489 (IGLG…TTHL). Basic and acidic residues predominate over residues 358 to 371 (PEEKADQVKVDRDS). The TBM motif lies at 492–507 (ESGGLALKYLLTPVDF).

This sequence belongs to the DNA repair metallo-beta-lactamase (DRMBL) family. In terms of assembly, interacts with TERF2; the interaction is direct. Interacts with MUS81, MRE11 and FANCD2. Interacts with HSPA2, HSPA8 and HSPA14. Interacts with SPAG5. Ubiquitinated, leading to its degradation. Interaction with TERF2 protects it from ubiquitination.

The protein resides in the chromosome. The protein localises to the telomere. It localises to the nucleus. Its subcellular location is the cytoplasm. It is found in the cytoskeleton. The protein resides in the microtubule organizing center. The protein localises to the centrosome. It carries out the reaction a beta-lactam + H2O = a substituted beta-amino acid. 5'-3' exonuclease that plays a central role in telomere maintenance and protection during S-phase. Participates in the protection of telomeres against non-homologous end-joining (NHEJ)-mediated repair, thereby ensuring that telomeres do not fuse. Plays a key role in telomeric loop (T loop) formation by being recruited by TERF2 at the leading end telomeres and by processing leading-end telomeres immediately after their replication via its exonuclease activity: generates 3' single-stranded overhang at the leading end telomeres avoiding blunt leading-end telomeres that are vulnerable to end-joining reactions and expose the telomere end in a manner that activates the DNA repair pathways. Together with TERF2, required to protect telomeres from replicative damage during replication by controlling the amount of DNA topoisomerase (TOP1, TOP2A and TOP2B) needed for telomere replication during fork passage and prevent aberrant telomere topology. Also involved in response to DNA damage: plays a role in response to DNA interstrand cross-links (ICLs) by facilitating double-strand break formation. In case of spindle stress, involved in prophase checkpoint. Possesses beta-lactamase activity, catalyzing the hydrolysis of penicillin G and nitrocefin. Exhibits no activity towards other beta-lactam antibiotic classes including cephalosporins (cefotaxime) and carbapenems (imipenem). This Rattus norvegicus (Rat) protein is 5' exonuclease Apollo (Dclre1b).